We begin with the raw amino-acid sequence, 83 residues long: Small ribosomal subunit protein uS17 (83 aa).

The protein belongs to the universal ribosomal protein uS17 family. As to quaternary structure, part of the 30S ribosomal subunit.

One of the primary rRNA binding proteins, it binds specifically to the 5'-end of 16S ribosomal RNA. In Campylobacter concisus (strain 13826), this protein is Small ribosomal subunit protein uS17.